Reading from the N-terminus, the 430-residue chain is Tyrosine--tRNA ligase (430 aa).

L-tyrosine is bound at residue tyrosine 32. A 'HIGH' region motif is present at residues 37–46 (PTADSLHIGH). Residues tyrosine 172 and glutamine 176 each contribute to the L-tyrosine site. The short motif at 232-236 (KFGKT) is the 'KMSKS' region element. Lysine 235 is an ATP binding site. Residues 362–430 (ISLVDLLADA…KKSYYLIIVE (69 aa)) form the S4 RNA-binding domain.

This sequence belongs to the class-I aminoacyl-tRNA synthetase family. TyrS type 1 subfamily. As to quaternary structure, homodimer.

The protein resides in the cytoplasm. The catalysed reaction is tRNA(Tyr) + L-tyrosine + ATP = L-tyrosyl-tRNA(Tyr) + AMP + diphosphate + H(+). Its function is as follows. Catalyzes the attachment of tyrosine to tRNA(Tyr) in a two-step reaction: tyrosine is first activated by ATP to form Tyr-AMP and then transferred to the acceptor end of tRNA(Tyr). The polypeptide is Tyrosine--tRNA ligase (Porphyromonas gingivalis (strain ATCC 33277 / DSM 20709 / CIP 103683 / JCM 12257 / NCTC 11834 / 2561)).